The sequence spans 323 residues: L-lactate dehydrogenase (323 aa).

Residues Val12, Asp33, and Tyr65 each contribute to the NAD(+) site. Substrate is bound by residues Arg94 and 126-129 (NPCD). NAD(+) is bound at residue Thr149. 154 to 157 (ETMR) contacts substrate. The active-site Proton acceptor is the His181. Position 234 (Thr234) interacts with substrate.

This sequence belongs to the LDH/MDH superfamily. LDH family. Homotetramer.

The protein resides in the cytoplasm. It catalyses the reaction (S)-lactate + NAD(+) = pyruvate + NADH + H(+). It participates in fermentation; pyruvate fermentation to lactate; (S)-lactate from pyruvate: step 1/1. Functionally, catalyzes the conversion of lactate to pyruvate. This Mycoplasmoides gallisepticum (strain R(low / passage 15 / clone 2)) (Mycoplasma gallisepticum) protein is L-lactate dehydrogenase.